The primary structure comprises 211 residues: Ribosomal RNA small subunit methyltransferase G (211 aa).

S-adenosyl-L-methionine is bound by residues glycine 79, leucine 84, 130–131 (VE), and arginine 145.

This sequence belongs to the methyltransferase superfamily. RNA methyltransferase RsmG family.

Its subcellular location is the cytoplasm. It catalyses the reaction guanosine(527) in 16S rRNA + S-adenosyl-L-methionine = N(7)-methylguanosine(527) in 16S rRNA + S-adenosyl-L-homocysteine. In terms of biological role, specifically methylates the N7 position of guanine in position 527 of 16S rRNA. The protein is Ribosomal RNA small subunit methyltransferase G of Alteromonas mediterranea (strain DSM 17117 / CIP 110805 / LMG 28347 / Deep ecotype).